The following is a 157-amino-acid chain: Stalk-specific protein B (157 aa).

Residues 1-19 (MRSILILLSLLLTIAFASA) form the signal peptide.

It is found in the secreted. This is Stalk-specific protein B (staB) from Dictyostelium discoideum (Social amoeba).